Reading from the N-terminus, the 37-residue chain is MKVRASVKKLCRNCKVVKRQGVVRVICSDPKHKQRQG.

It belongs to the bacterial ribosomal protein bL36 family.

The polypeptide is Large ribosomal subunit protein bL36A (Actinobacillus pleuropneumoniae serotype 5b (strain L20)).